The primary structure comprises 572 residues: Far upstream element-binding protein 3 (572 aa).

N-acetylalanine is present on A2. Glycyl lysine isopeptide (Lys-Gly) (interchain with G-Cter in SUMO2) cross-links involve residues K15 and K57. Position 76 is a phosphothreonine (T76). 4 KH domains span residues 77 to 141, 162 to 228, 253 to 317, and 354 to 421; these read VITE…KRLL, STIQ…REMV, GGSI…AHII, and VQEI…RQLI. S296 bears the Phosphoserine mark. The tract at residues 426 to 521 is disordered; it reads GGTNLGAPGA…SQPNYSKAWE (96 aa). The segment covering 496–514 has biased composition (low complexity); that stretch reads QQPTQQVPSQQSQPQSSQP. Residues S539 and S569 each carry the phosphoserine modification.

Detected in a number of cell lines.

The protein localises to the nucleus. May interact with single-stranded DNA from the far-upstream element (FUSE). May activate gene expression. This Homo sapiens (Human) protein is Far upstream element-binding protein 3 (FUBP3).